Reading from the N-terminus, the 152-residue chain is Heavy metal-associated isoprenylated plant protein 22 (152 aa).

Positions 28–91 (MQTVNIKVKI…TVQSTGKKKA (64 aa)) constitute an HMA domain. The a metal cation site is built by cysteine 39 and cysteine 42. The disordered stretch occupies residues 123-152 (SEQAQAQPGSTDDKLMSLFSDENPNACTVM). The segment covering 142 to 152 (SDENPNACTVM) has biased composition (polar residues). Cysteine 149 is subject to Cysteine methyl ester. Cysteine 149 carries S-farnesyl cysteine lipidation. The propeptide at 150 to 152 (TVM) is removed in mature form.

This sequence belongs to the HIPP family. Interacts with ZHD11/HB29. In terms of tissue distribution, expressed in lateral roots and mature anthers.

Its subcellular location is the membrane. Heavy-metal-binding protein. Binds cadmium. May be involved in cadmium transport and play a role in cadmium detoxification. The protein is Heavy metal-associated isoprenylated plant protein 22 of Arabidopsis thaliana (Mouse-ear cress).